The sequence spans 82 residues: Small ribosomal subunit protein uS17 (82 aa).

The protein belongs to the universal ribosomal protein uS17 family. As to quaternary structure, part of the 30S ribosomal subunit.

Functionally, one of the primary rRNA binding proteins, it binds specifically to the 5'-end of 16S ribosomal RNA. This Rhodopseudomonas palustris (strain BisA53) protein is Small ribosomal subunit protein uS17.